Here is a 299-residue protein sequence, read N- to C-terminus: Plant-type L-asparaginase (299 aa).

Thr-169 (nucleophile) is an active-site residue. Substrate is bound by residues Arg-197–Asp-200 and Thr-220–Gly-223.

The protein belongs to the Ntn-hydrolase family. Heterotetramer of two alpha and two beta chains arranged as a dimer of alpha/beta heterodimers. The uncleaved protein forms homodimers. In terms of processing, autocleaved. Generates the alpha and beta subunits. The N-terminal residue of the beta subunit is thought to be responsible for the nucleophile hydrolase activity.

It catalyses the reaction L-asparagine + H2O = L-aspartate + NH4(+). Divalent metal ions and EDTA do not have significant effect on enzyme activity, indicating that activity is metal-independent. Its function is as follows. Catalyzes the hydrolysis of L-asparagine into L-aspartate and ammonia. Also displays D-asparaginase activity, which is about 20% of the L-asparaginase activity. Does not exhibit glutaminase activity. The sequence is that of Plant-type L-asparaginase from Pyrobaculum calidifontis (strain DSM 21063 / JCM 11548 / VA1).